A 792-amino-acid polypeptide reads, in one-letter code: Kinesin-related protein 2 (792 aa).

Disordered stretches follow at residues threonine 22 to threonine 50 and asparagine 162 to glutamine 183. A compositionally biased stretch (polar residues) spans alanine 34–threonine 50. A coiled-coil region spans residues arginine 284–valine 423. The 345-residue stretch at asparagine 437 to cysteine 781 folds into the Kinesin motor domain. Glycine 528–threonine 535 is a binding site for ATP.

Belongs to the TRAFAC class myosin-kinesin ATPase superfamily. Kinesin family. NCD subfamily.

It is found in the nucleus. It localises to the cytoplasm. The protein localises to the cytoskeleton. The protein resides in the spindle. In terms of biological role, microtubule-dependent motor that is probably involved in microtubule organization in the mitotic spindle. This chain is Kinesin-related protein 2 (kif2), found in Dictyostelium discoideum (Social amoeba).